The following is a 529-amino-acid chain: uncharacterized protein (529 aa).

Residues 26-58 (CDSCRKQKTRCLAGSVEDENRACLRCRSLNMDC) constitute a DNA-binding region (zn(2)-C6 fungal-type).

The protein localises to the nucleus. This is an uncharacterized protein from Schizosaccharomyces pombe (strain 972 / ATCC 24843) (Fission yeast).